Consider the following 704-residue polypeptide: Ribosomal RNA large subunit methyltransferase K/L (704 aa).

This sequence belongs to the methyltransferase superfamily. RlmKL family.

It localises to the cytoplasm. The enzyme catalyses guanosine(2445) in 23S rRNA + S-adenosyl-L-methionine = N(2)-methylguanosine(2445) in 23S rRNA + S-adenosyl-L-homocysteine + H(+). It catalyses the reaction guanosine(2069) in 23S rRNA + S-adenosyl-L-methionine = N(2)-methylguanosine(2069) in 23S rRNA + S-adenosyl-L-homocysteine + H(+). In terms of biological role, specifically methylates the guanine in position 2445 (m2G2445) and the guanine in position 2069 (m7G2069) of 23S rRNA. In Alcanivorax borkumensis (strain ATCC 700651 / DSM 11573 / NCIMB 13689 / SK2), this protein is Ribosomal RNA large subunit methyltransferase K/L.